We begin with the raw amino-acid sequence, 95 residues long: Acylphosphatase (95 aa).

The Acylphosphatase-like domain maps to 8–95 (RVSARITGRV…DAFEGFRVRR (88 aa)). Residues arginine 23 and asparagine 41 contribute to the active site.

Belongs to the acylphosphatase family.

The enzyme catalyses an acyl phosphate + H2O = a carboxylate + phosphate + H(+). This is Acylphosphatase (acyP) from Salinibacter ruber (strain DSM 13855 / M31).